We begin with the raw amino-acid sequence, 256 residues long: L-erythrulose-1-phosphate isomerase (256 aa).

The Electrophile role is filled by H96. E169 acts as the Proton acceptor in catalysis. Positions 175 and 212 each coordinate substrate.

The protein belongs to the triosephosphate isomerase family. As to quaternary structure, homodimer.

The protein localises to the cytoplasm. The catalysed reaction is L-erythrulose 1-phosphate = D-erythrulose 4-phosphate. It functions in the pathway carbohydrate metabolism; erythritol degradation. Catalyzes the isomerization of D-erythrulose-4P to L-erythrulose-1P. Involved in the degradation pathway of erythritol, that allows B.abortus to grow on this compound as the sole carbon source. The polypeptide is L-erythrulose-1-phosphate isomerase (Brucella abortus (strain 2308)).